Consider the following 242-residue polypeptide: 6-carboxyhexanoate--CoA ligase (242 aa).

Belongs to the BioW family. Homodimer. The cofactor is Mg(2+).

The enzyme catalyses heptanedioate + ATP + CoA = 6-carboxyhexanoyl-CoA + AMP + diphosphate. The protein operates within metabolic intermediate metabolism; pimeloyl-CoA biosynthesis; pimeloyl-CoA from pimelate: step 1/1. Catalyzes the transformation of pimelate into pimeloyl-CoA with concomitant hydrolysis of ATP to AMP. The sequence is that of 6-carboxyhexanoate--CoA ligase from Veillonella parvula (strain ATCC 10790 / DSM 2008 / CCUG 5123 / JCM 12972 / NCTC 11810 / Te3) (Veillonella alcalescens).